We begin with the raw amino-acid sequence, 102 residues long: Small ribosomal subunit protein uS10 (102 aa).

It belongs to the universal ribosomal protein uS10 family. As to quaternary structure, part of the 30S ribosomal subunit.

Its function is as follows. Involved in the binding of tRNA to the ribosomes. The protein is Small ribosomal subunit protein uS10 of Methanospirillum hungatei JF-1 (strain ATCC 27890 / DSM 864 / NBRC 100397 / JF-1).